Consider the following 702-residue polypeptide: MAKITKTFQYGKHTVTLETGEIARQAGGAVIVKFDDTVLLVSAVAAKSAREGQDFFPLTCDYQEKFYAGGRIPGGFFKREGRATEKETLISRLIDRPIRPLFPEDYKNEVQIIATVMSLNPEIDGDIPALIGASAALSLAGTPFKGPIAAAKVGYKDGEYILNPTVSELKESQLELVVAGTANAVLMVESEAALLSEDVMLGAVTFGHREMQKVINAINELTVEAGTKPSTWEAPAKNTALISAVQEAVGPRLGEAFQVRDKLQRRDAISAIKKDVVESLAGRVAAEGWNPAELSKEFGELEYSTMRNSVLDTKVRIDGRALDTVRPIAVKTSVLPRTHGSSLFTRGETQAIVTITLGTARDGQVIDAVSGEYKENFLFHYNFPPYSVGETGRMMGPKRREIGHGRLAKRGVLAVMPSLESFPYTIRVVSEITESNGSSSMASVCGSSLALMDAGVPVKAPVAGIAMGLVKEGDRFVVLSDILGDEDHLGDMDFKVAGTAEGISALQMDIKIEGITEEIMKQALQQAKAGRLHILGEMAHGLTAPREELSDYAPRLLTIKIHPDKIREVIGKGGSTIQAITKETGTQIDIQDDGTIVIASVNAIAAQAAKARIEQITSDVEPGRIYEGKVAKIMDFGAFVTILPGKDGLVHVSQISSDRVEKVGDVLKEGDVVKVKVLEVDKQGRIRLSMKAVEEGEGASAE.

Mg(2+) is bound by residues Asp-487 and Asp-493. Positions 554–613 (PRLLTIKIHPDKIREVIGKGGSTIQAITKETGTQIDIQDDGTIVIASVNAIAAQAAKARI) constitute a KH domain. An S1 motif domain is found at 623-691 (GRIYEGKVAK…KQGRIRLSMK (69 aa)).

It belongs to the polyribonucleotide nucleotidyltransferase family. Component of the RNA degradosome, which is a multiprotein complex involved in RNA processing and mRNA degradation. Mg(2+) is required as a cofactor.

It is found in the cytoplasm. It catalyses the reaction RNA(n+1) + phosphate = RNA(n) + a ribonucleoside 5'-diphosphate. Its function is as follows. Involved in mRNA degradation. Catalyzes the phosphorolysis of single-stranded polyribonucleotides processively in the 3'- to 5'-direction. The chain is Polyribonucleotide nucleotidyltransferase from Stenotrophomonas maltophilia (strain R551-3).